Reading from the N-terminus, the 295-residue chain is 33 kDa chaperonin (295 aa).

Cystine bridges form between Cys237–Cys239 and Cys270–Cys273.

The protein belongs to the HSP33 family. In terms of processing, under oxidizing conditions two disulfide bonds are formed involving the reactive cysteines. Under reducing conditions zinc is bound to the reactive cysteines and the protein is inactive.

It localises to the cytoplasm. Functionally, redox regulated molecular chaperone. Protects both thermally unfolding and oxidatively damaged proteins from irreversible aggregation. Plays an important role in the bacterial defense system toward oxidative stress. In Symbiobacterium thermophilum (strain DSM 24528 / JCM 14929 / IAM 14863 / T), this protein is 33 kDa chaperonin.